Reading from the N-terminus, the 541-residue chain is Zinc finger CCHC domain-containing protein 7 (541 aa).

Residues 111–144 (AEEKTQSPATSHSNKVAQKCKRNNKKPKPEERPG) are disordered. Residues 116–126 (QSPATSHSNKV) are compositionally biased toward polar residues. Residues K129, K136, K138, K234, and K249 each participate in a glycyl lysine isopeptide (Lys-Gly) (interchain with G-Cter in SUMO2) cross-link. 3 consecutive CCHC-type zinc fingers follow at residues 236–253 (VTCRNCDKRGHLSKNCPL), 258–275 (RACCLCSERGHLQYGCPA), and 299–316 (KRCDRCDMIGHHADACPE). Residue K334 forms a Glycyl lysine isopeptide (Lys-Gly) (interchain with G-Cter in SUMO2) linkage. A CCHC-type 4 zinc finger spans residues 343–360 (VYCYNCAQKGHYGHECTE). Residues 394-541 (VKDLKKNGDF…KKKKPKPSGL (148 aa)) form a disordered region. Glycyl lysine isopeptide (Lys-Gly) (interchain with G-Cter in SUMO2) cross-links involve residues K408 and K431. The span at 418–434 (RRHHDMRKSRSPRKYRR) shows a compositional bias: basic residues. The span at 435 to 452 (WPRENKETQKEKTRSREG) shows a compositional bias: basic and acidic residues. A Glycyl lysine isopeptide (Lys-Gly) (interchain with G-Cter in SUMO2) cross-link involves residue K473. Residues 474–486 (PNASGCANNQKPS) are compositionally biased toward polar residues. At S477 the chain carries Phosphoserine. Residues K484 and K487 each participate in a glycyl lysine isopeptide (Lys-Gly) (interchain with G-Cter in SUMO2) cross-link. Residues 487–497 (KSLHHASHYHR) are compositionally biased toward basic residues. 2 stretches are compositionally biased toward basic and acidic residues: residues 498 to 509 (LREERLLRESKR) and 517 to 527 (STEDGSHDDLF). A Glycyl lysine isopeptide (Lys-Gly) (interchain with G-Cter in SUMO2) cross-link involves residue K530. The span at 530-541 (KQKKKKPKPSGL) shows a compositional bias: basic residues.

Component of a nucleolar TRAMP-like complex, an ATP-dependent exosome regulatory complex consisting of a helicase (MTREX), an oligadenylate polymerase (TENT4B or TENT4A), and a substrate specific RNA-binding factor (ZCCHC7 or ZCCHC8). Several TRAMP-like complexes exist with specific compositions and are associated with nuclear, or nucleolar RNA exosomes.

It is found in the nucleus. The protein resides in the nucleolus. The sequence is that of Zinc finger CCHC domain-containing protein 7 (Zcchc7) from Mus musculus (Mouse).